The sequence spans 414 residues: 3-oxoacyl-[acyl-carrier-protein] synthase 2 (414 aa).

Positions 4-411 constitute a Ketosynthase family 3 (KS3) domain; that stretch reads NKRVVITGMG…GHNAVLVFKK (408 aa). Active-site for beta-ketoacyl synthase activity residues include cysteine 165, histidine 304, and histidine 341.

Belongs to the thiolase-like superfamily. Beta-ketoacyl-ACP synthases family.

The catalysed reaction is a fatty acyl-[ACP] + malonyl-[ACP] + H(+) = a 3-oxoacyl-[ACP] + holo-[ACP] + CO2. It catalyses the reaction (9Z)-hexadecenoyl-[ACP] + malonyl-[ACP] + H(+) = 3-oxo-(11Z)-octadecenoyl-[ACP] + holo-[ACP] + CO2. Its pathway is lipid metabolism; fatty acid biosynthesis. Functionally, involved in the type II fatty acid elongation cycle. Catalyzes the elongation of a wide range of acyl-ACP by the addition of two carbons from malonyl-ACP to an acyl acceptor. Can efficiently catalyze the conversion of palmitoleoyl-ACP (cis-hexadec-9-enoyl-ACP) to cis-vaccenoyl-ACP (cis-octadec-11-enoyl-ACP), an essential step in the thermal regulation of fatty acid composition. This Staphylococcus aureus (strain Mu50 / ATCC 700699) protein is 3-oxoacyl-[acyl-carrier-protein] synthase 2 (fabF).